The sequence spans 319 residues: Transaldolase (319 aa).

Residue Lys-126 is the Schiff-base intermediate with substrate of the active site.

The protein belongs to the transaldolase family. Type 1 subfamily. As to quaternary structure, homodimer.

It localises to the cytoplasm. It catalyses the reaction D-sedoheptulose 7-phosphate + D-glyceraldehyde 3-phosphate = D-erythrose 4-phosphate + beta-D-fructose 6-phosphate. Its pathway is carbohydrate degradation; pentose phosphate pathway; D-glyceraldehyde 3-phosphate and beta-D-fructose 6-phosphate from D-ribose 5-phosphate and D-xylulose 5-phosphate (non-oxidative stage): step 2/3. Its function is as follows. Transaldolase is important for the balance of metabolites in the pentose-phosphate pathway. The sequence is that of Transaldolase from Bordetella petrii (strain ATCC BAA-461 / DSM 12804 / CCUG 43448).